Reading from the N-terminus, the 466-residue chain is Muscarinic acetylcholine receptor M2 (466 aa).

Residues 1 to 25 are Extracellular-facing; that stretch reads MNNSTYINSSSENVIALESPYKTIE. Residues asparagine 2, asparagine 3, and asparagine 8 are each glycosylated (N-linked (GlcNAc...) asparagine). Residues 26–48 traverse the membrane as a helical segment; it reads VVFIVLVAGSLSLVTIIGNILVM. Topologically, residues 49–62 are cytoplasmic; that stretch reads VSIKVNRHLQTVNN. The helical transmembrane segment at 63–83 threads the bilayer; that stretch reads YFLFSLACADLIIGIFSMNLY. Over 84-100 the chain is Extracellular; that stretch reads TLYTVIGYWPLGPVVCD. Cysteine 99 and cysteine 179 are joined by a disulfide. A helical transmembrane segment spans residues 101-122; the sequence is LWLALDYVVSNASVMNLLIISF. The short motif at 123–125 is the Important for signaling element; the sequence is DRY. Over 123–142 the chain is Cytoplasmic; the sequence is DRYFCVTKPLTYPVKRTTKM. The chain crosses the membrane as a helical span at residues 143–165; that stretch reads AGMMIAAAWVLSFILWAPAILFW. At 166–187 the chain is on the extracellular side; sequence QFIVGGRTVPDKDCYIQFFSNP. The chain crosses the membrane as a helical span at residues 188–212; that stretch reads AVTFGTAIAAFYLPVIIMTVLYWQI. Topologically, residues 213 to 387 are cytoplasmic; it reads SRASKSRIKK…PPSREKKVTR (175 aa). Disordered regions lie at residues 223–265 and 279–315; these read GKKE…KVQN and QGEEKDSSNDSTSVSVVPSNTKEDEAAKDASQISASQ. Polar residues-rich tracts occupy residues 228-238 and 246-256; these read AQNQDPVSPSL and PNNNNIPTSSD. Residues 287-298 are compositionally biased toward low complexity; sequence NDSTSVSVVPSN. Residues 388–410 traverse the membrane as a helical segment; sequence TILAILLAFIITWTPYNVMVLIN. Topologically, residues 411–418 are extracellular; the sequence is SFCASCIP. A disulfide bridge connects residues cysteine 413 and cysteine 416. A helical membrane pass occupies residues 419-442; sequence GTVWTIGYWLCYINSTINPACYAL. The short motif at 436–440 is the Important for signaling element; it reads NPACY. Residues 443 to 466 are Cytoplasmic-facing; the sequence is CNATFKKTFKHLLMCHYKNIGATR. Threonine 446, threonine 450, and threonine 465 each carry phosphothreonine.

Belongs to the G-protein coupled receptor 1 family. Muscarinic acetylcholine receptor subfamily. CHRM2 sub-subfamily.

Its subcellular location is the cell membrane. It localises to the postsynaptic cell membrane. In terms of biological role, the muscarinic acetylcholine receptor mediates various cellular responses, including inhibition of adenylate cyclase, breakdown of phosphoinositides and modulation of potassium channels through the action of G proteins. Primary transducing effect is adenylate cyclase inhibition. Signaling promotes phospholipase C activity, leading to the release of inositol trisphosphate (IP3); this then triggers calcium ion release into the cytosol. This chain is Muscarinic acetylcholine receptor M2 (CHRM2), found in Gallus gallus (Chicken).